The following is an 85-amino-acid chain: Large ribosomal subunit protein bL27 (85 aa).

Residues 1–22 form a disordered region; sequence MAHKKAGGSTNNGRDSESKRLG.

The protein belongs to the bacterial ribosomal protein bL27 family.

The protein is Large ribosomal subunit protein bL27 of Psychromonas ingrahamii (strain DSM 17664 / CCUG 51855 / 37).